The sequence spans 143 residues: Oxoglutarate dehydrogenase inhibitor (143 aa).

Thr14 bears the Phosphothreonine mark. Residues 68 to 117 (TTAGRHPESDIFLDDVTVSRRHAEFRINEGEFEVVDVGSLNGTYVNREPR) enclose the FHA domain.

It localises to the cytoplasm. Its function is as follows. An essential component of the PknG signaling pathway. When unphosphorylated, it inhibits the activity of 2-oxoglutarate dehydrogenase. When phosphorylated it does not inhibit 2-oxoglutarate dehydrogenase. This is Oxoglutarate dehydrogenase inhibitor (odhI) from Corynebacterium glutamicum (strain ATCC 13032 / DSM 20300 / JCM 1318 / BCRC 11384 / CCUG 27702 / LMG 3730 / NBRC 12168 / NCIMB 10025 / NRRL B-2784 / 534).